A 371-amino-acid polypeptide reads, in one-letter code: Nuclear hormone receptor family member nhr-51 (371 aa).

Residues 2–77 constitute a DNA-binding region (nuclear receptor); the sequence is NKNCLICHRK…MGMQAFPRRV (76 aa). NR C4-type zinc fingers lie at residues 5–25 and 41–60; these read CLIC…CFAC and CQKF…CKAC. Positions 98-337 constitute an NR LBD domain; the sequence is MDEQRHWRML…KQLVTDTFVD (240 aa).

This sequence belongs to the nuclear hormone receptor family.

Its subcellular location is the nucleus. Functionally, orphan nuclear receptor. The sequence is that of Nuclear hormone receptor family member nhr-51 (nhr-51) from Caenorhabditis elegans.